A 61-amino-acid chain; its full sequence is Temporin-1Tb (61 aa).

Residues 1-22 (MFTLKKSLLLLFFLGTINLSLC) form the signal peptide. A propeptide spanning residues 23-44 (EEERNAEEERRDEPDERDVQVE) is cleaved from the precursor. Leu59 bears the Leucine amide mark.

Belongs to the frog skin active peptide (FSAP) family. Temporin subfamily. Homo-oligomerizes in membranes as homodimers, homotrimers, or even homotetramers. Oligomerizes in presence of LPS. In Gram-positive bacterial mimetic membranes, the aggregation is weakly pronounced, and penetration proceeds more rapidly and is deeper than in Gram-negative bacterial mimetic membranes where aggregation is high. Homo-oligomerization is prevented by temporin-L. In terms of tissue distribution, expressed by the skin glands.

The protein resides in the secreted. It localises to the target cell membrane. The protein localises to the target cell. Its subcellular location is the target cell cytoplasm. Its function is as follows. Amphipathic alpha-helical antimicrobial peptide with potent activity against Gram-positive bacteria, weak activity against Gram-negative bacteria, and moderate activity against fungi. Mainly acts by causing membrane permeabilization, but is unable to forme pore-like openings. Is also able to penetrate eukaryotic cells (keratinocytes), and kill intracellular S.aureus (both wild-type and MRSA) without injuring host cells. Shows inhibitory effect on biofilm formation of Gram-positive bacteria, but not of Gram-negative bacteria. Shows antiviral activity against herpes simplex virus 1 (HSV-1) by disrupting the viral envelope. Also displays anti-leishmania activity by damaging parasite membrane. Does not show hemolytic activity. Acts synergistically with temporin-L that improves temporin-1Tb activity by preventing its self-association in lipopolysaccharides (LPS). In vitro, promotes cell migration and wound healing. The polypeptide is Temporin-1Tb (Rana temporaria (European common frog)).